The following is a 257-amino-acid chain: MLVVISPAKTLDYDNPAPTKQYTLPELVSHSAELIEVCKGLTPADIASLMSVSDKIAGLNAARFASWTPSFSLENAKQALFAFRGDVYTGLDADTLSPEELEYAQSHLRMLSGLYGVLKPLDLMQAYRLEMGTALGNGRGKNLYEFWGNLITDKLNEALSAQGDDILVNLASNEYFKAVKIKGIKGTLVNPVFKDAKNGQYKIISFYAKKARGLMARFILTTRTKTIEDLKRFDYDGYYYSPEQSTPCTPVFLREER.

This sequence belongs to the UPF0246 family.

The chain is UPF0246 protein Sama_0917 from Shewanella amazonensis (strain ATCC BAA-1098 / SB2B).